The following is a 545-amino-acid chain: CTP synthase (545 aa).

An amidoligase domain region spans residues Met-1–Leu-266. Position 14 (Ser-14) interacts with CTP. Ser-14 provides a ligand contact to UTP. ATP-binding positions include Ser-15 to Ile-20 and Asp-72. Mg(2+)-binding residues include Asp-72 and Glu-140. CTP contacts are provided by residues Asp-147–Glu-149, Lys-187–Gln-192, and Lys-223. Residues Lys-187–Gln-192 and Lys-223 contribute to the UTP site. Position 239 to 241 (Arg-239 to Val-241) interacts with ATP. A Glutamine amidotransferase type-1 domain is found at Ile-291–Gly-542. Position 352 (Gly-352) interacts with L-glutamine. The active-site Nucleophile; for glutamine hydrolysis is the Cys-379. L-glutamine is bound by residues Leu-380–Gln-383, Glu-403, and Arg-470. Active-site residues include His-515 and Glu-517.

It belongs to the CTP synthase family. Homotetramer.

The enzyme catalyses UTP + L-glutamine + ATP + H2O = CTP + L-glutamate + ADP + phosphate + 2 H(+). It carries out the reaction L-glutamine + H2O = L-glutamate + NH4(+). It catalyses the reaction UTP + NH4(+) + ATP = CTP + ADP + phosphate + 2 H(+). It functions in the pathway pyrimidine metabolism; CTP biosynthesis via de novo pathway; CTP from UDP: step 2/2. With respect to regulation, allosterically activated by GTP, when glutamine is the substrate; GTP has no effect on the reaction when ammonia is the substrate. The allosteric effector GTP functions by stabilizing the protein conformation that binds the tetrahedral intermediate(s) formed during glutamine hydrolysis. Inhibited by the product CTP, via allosteric rather than competitive inhibition. In terms of biological role, catalyzes the ATP-dependent amination of UTP to CTP with either L-glutamine or ammonia as the source of nitrogen. Regulates intracellular CTP levels through interactions with the four ribonucleotide triphosphates. The polypeptide is CTP synthase (Psychromonas ingrahamii (strain DSM 17664 / CCUG 51855 / 37)).